The primary structure comprises 243 residues: Biosynthetic peptidoglycan transglycosylase (243 aa).

A helical transmembrane segment spans residues 21 to 43 (LLIVSLVSALMSVLQVIVFRFVD).

Belongs to the glycosyltransferase 51 family.

The protein localises to the cell inner membrane. The catalysed reaction is [GlcNAc-(1-&gt;4)-Mur2Ac(oyl-L-Ala-gamma-D-Glu-L-Lys-D-Ala-D-Ala)](n)-di-trans,octa-cis-undecaprenyl diphosphate + beta-D-GlcNAc-(1-&gt;4)-Mur2Ac(oyl-L-Ala-gamma-D-Glu-L-Lys-D-Ala-D-Ala)-di-trans,octa-cis-undecaprenyl diphosphate = [GlcNAc-(1-&gt;4)-Mur2Ac(oyl-L-Ala-gamma-D-Glu-L-Lys-D-Ala-D-Ala)](n+1)-di-trans,octa-cis-undecaprenyl diphosphate + di-trans,octa-cis-undecaprenyl diphosphate + H(+). It participates in cell wall biogenesis; peptidoglycan biosynthesis. Its function is as follows. Peptidoglycan polymerase that catalyzes glycan chain elongation from lipid-linked precursors. In Xylella fastidiosa (strain Temecula1 / ATCC 700964), this protein is Biosynthetic peptidoglycan transglycosylase.